A 393-amino-acid chain; its full sequence is Bone morphogenetic protein 15 (393 aa).

The first 25 residues, 1–25 (MVLLSILRILLWGLVLFMEHRVQMT), serve as a signal peptide directing secretion. The propeptide occupies 26–268 (QVGQPSIAHL…DPSLLLRRAR (243 aa)). Residues asparagine 86 and asparagine 237 are each glycosylated (N-linked (GlcNAc...) asparagine). 3 disulfides stabilise this stretch: cysteine 292-cysteine 358, cysteine 321-cysteine 390, and cysteine 325-cysteine 392. Asparagine 374 is a glycosylation site (N-linked (GlcNAc...) asparagine).

This sequence belongs to the TGF-beta family. As to quaternary structure, homodimer. But, in contrast to other members of this family, cannot be disulfide-linked.

Its subcellular location is the secreted. Its function is as follows. May be involved in follicular development. Oocyte-specific growth/differentiation factor that stimulates folliculogenesis and granulosa cell (GC) growth. The chain is Bone morphogenetic protein 15 (BMP15) from Ovis aries (Sheep).